A 482-amino-acid chain; its full sequence is MENKIEVNNKDEMNKWFEEFKKGNGLVDTFTNPYSFCESVPNLERFVFQMASATDDAQKDSIYASALVEATKFCAPIYECAWVSSTGIVKKGLEWFEKNAGTIKSWDESYIELKVEVPKIEQLANYQQAALKWRKDIGFRVNANTAALSHKVLAEYKVPGEIVMSVKEMLSDMIRRRNLILNRGGDENPRGPVSREHVEWCREFVKGKYIMAFNPPWGDINKSGRSGIALVATGLAKLAETEGKGVFDEAKKTVEALNGYLDKHKDEVDKASADNMITNLLKHIAKAQELYKNSSALRAQGAQIDTAFSSYYWLYKAGVTPETFPTVSQFLFELGKQPRGTKKMKKALLSTPMKWGKKLYELFADDSFQQNRIYMHPAVLTAGRISEMGVCFGTIPVANPDDAAQGSGHTKSILNLRTNTETNNPCAKTIVKLFEIQKTGFNIQDMDIVASEHLLHQSLVGKQSPFQNAYNVKGNATSANII.

A DEVD motif is present at residues 266 to 269; that stretch reads DEVD.

Belongs to the nairovirus nucleocapsid protein family. In terms of assembly, probable homooligomer; forms a double superhelical polymer. Monomer. Mn(2+) is required as a cofactor. In terms of processing, cleaved at the DQVD motif by host CASP3/caspase 3 in mammalian cells at 48 hours postinfection giving rise to cleavage products of about 30 kDa and 22 kDa that remain associated. Only the monomeric form is cleaved. Little or no cleavage in tick cells. Caspase cleavage reduces the viral polymerase activity. Caspase cleavage is not required for productive infection in mammalian or tick host cells.

The protein localises to the virion. Binds dsRNA and ssRNA and probably participates in the packaging of viral genome. In the dsRNA binding mode, the nucleocapsid protein specifically binds to the vRNA panhandle secondary structure formed at the termini of viral genome. Does not discriminate between viral and nonviral RNAs through ssRNA binding mode. Displays dsDNA endonuclease activity that is sequence non-specific. The polypeptide is Nucleoprotein (N) (Crimean-Congo hemorrhagic fever virus (isolate C68031) (CCHFV)).